Consider the following 147-residue polypeptide: Alpha-amylase/trypsin inhibitor (147 aa).

The N-terminal stretch at 1 to 21 is a signal peptide; sequence MASDHRRFVLSGAVLLSVLAV.

It belongs to the protease inhibitor I6 (cereal trypsin/alpha-amylase inhibitor) family. Five disulfide bonds, which are essential for the inhibitor activity, are probably present. As to expression, endosperm.

The protein resides in the secreted. Alpha-amylase/trypsin inhibitor. This is Alpha-amylase/trypsin inhibitor from Hordeum vulgare (Barley).